A 292-amino-acid polypeptide reads, in one-letter code: Type II methyltransferase M.SmaI (292 aa).

Residues 110-130 form a disordered region; the sequence is WRDKDDKNKGRAMSYRPPTPE.

The protein belongs to the N(4)/N(6)-methyltransferase family. N(4) subfamily.

The catalysed reaction is a 2'-deoxycytidine in DNA + S-adenosyl-L-methionine = an N(4)-methyl-2'-deoxycytidine in DNA + S-adenosyl-L-homocysteine + H(+). Its function is as follows. A beta subtype methylase thatnrecognizes the double-stranded sequence 5'-CCCGGG-3', methylates C-2 on both strands, and protects the DNA from cleavage by the SmaI endonuclease. This Serratia marcescens protein is Type II methyltransferase M.SmaI (smaIM).